Here is a 189-residue protein sequence, read N- to C-terminus: Elongation factor P (189 aa).

This sequence belongs to the elongation factor P family.

Its subcellular location is the cytoplasm. It functions in the pathway protein biosynthesis; polypeptide chain elongation. In terms of biological role, involved in peptide bond synthesis. Stimulates efficient translation and peptide-bond synthesis on native or reconstituted 70S ribosomes in vitro. Probably functions indirectly by altering the affinity of the ribosome for aminoacyl-tRNA, thus increasing their reactivity as acceptors for peptidyl transferase. The polypeptide is Elongation factor P (Pseudomonas savastanoi pv. phaseolicola (strain 1448A / Race 6) (Pseudomonas syringae pv. phaseolicola (strain 1448A / Race 6))).